We begin with the raw amino-acid sequence, 256 residues long: 2-C-methyl-D-erythritol 4-phosphate cytidylyltransferase (256 aa).

The protein belongs to the IspD/TarI cytidylyltransferase family. IspD subfamily.

The enzyme catalyses 2-C-methyl-D-erythritol 4-phosphate + CTP + H(+) = 4-CDP-2-C-methyl-D-erythritol + diphosphate. It functions in the pathway isoprenoid biosynthesis; isopentenyl diphosphate biosynthesis via DXP pathway; isopentenyl diphosphate from 1-deoxy-D-xylulose 5-phosphate: step 2/6. Catalyzes the formation of 4-diphosphocytidyl-2-C-methyl-D-erythritol from CTP and 2-C-methyl-D-erythritol 4-phosphate (MEP). The chain is 2-C-methyl-D-erythritol 4-phosphate cytidylyltransferase from Corynebacterium glutamicum (strain ATCC 13032 / DSM 20300 / JCM 1318 / BCRC 11384 / CCUG 27702 / LMG 3730 / NBRC 12168 / NCIMB 10025 / NRRL B-2784 / 534).